A 31-amino-acid chain; its full sequence is Photosystem II reaction center protein T (31 aa).

A helical membrane pass occupies residues 3 to 23 (ALVYTFLLVGTLGIIFFSIFF).

It belongs to the PsbT family. In terms of assembly, PSII is composed of 1 copy each of membrane proteins PsbA, PsbB, PsbC, PsbD, PsbE, PsbF, PsbH, PsbI, PsbJ, PsbK, PsbL, PsbM, PsbT, PsbY, PsbZ, Psb30/Ycf12, at least 3 peripheral proteins of the oxygen-evolving complex and a large number of cofactors. It forms dimeric complexes.

It localises to the plastid. Its subcellular location is the chloroplast thylakoid membrane. Its function is as follows. Found at the monomer-monomer interface of the photosystem II (PS II) dimer, plays a role in assembly and dimerization of PSII. PSII is a light-driven water plastoquinone oxidoreductase, using light energy to abstract electrons from H(2)O, generating a proton gradient subsequently used for ATP formation. This Chlamydomonas reinhardtii (Chlamydomonas smithii) protein is Photosystem II reaction center protein T.